The sequence spans 396 residues: Purple acid phosphatase 5 (396 aa).

Residues M1–N13 form the signal peptide. A glycan (N-linked (GlcNAc...) asparagine) is linked at N58. D125 is a binding site for Fe cation. N-linked (GlcNAc...) asparagine glycosylation is present at N133. Fe cation-binding residues include D153 and Y156. A Zn(2+)-binding site is contributed by D153. N190 is a binding site for Zn(2+). Residue N190 coordinates substrate. N238 is a glycosylation site (N-linked (GlcNAc...) asparagine). H250 contributes to the Zn(2+) binding site. H260 (proton donor) is an active-site residue. H287 is a binding site for Zn(2+). H287–H289 lines the substrate pocket. Residue H289 coordinates Fe cation. N-linked (GlcNAc...) asparagine glycans are attached at residues N303 and N360.

The protein belongs to the metallophosphoesterase superfamily. Purple acid phosphatase family. Homodimer. Fe cation serves as cofactor. Zn(2+) is required as a cofactor.

It is found in the secreted. It carries out the reaction a phosphate monoester + H2O = an alcohol + phosphate. The chain is Purple acid phosphatase 5 (PAP5) from Arabidopsis thaliana (Mouse-ear cress).